The primary structure comprises 763 residues: Dual specificity tyrosine-phosphorylation-regulated kinase 1A (763 aa).

Ser-14 is modified (phosphoserine). A disordered region spans residues 32 to 57; it reads GQMPHSHQYSDRRQPNISDQQVSALS. The span at 46 to 57 shows a compositional bias: polar residues; it reads PNISDQQVSALS. Tyr-111 bears the Phosphotyrosine; by autocatalysis mark. The segment at 115–136 is disordered; sequence KKRRHQQGQGDDSSHKKERKVY. The Bipartite nuclear localization signal motif lies at 117 to 134; that stretch reads RRHQQGQGDDSSHKKERK. Tyr-140 carries the post-translational modification Phosphotyrosine; by autocatalysis. Residue Tyr-145 is modified to Phosphotyrosine. Position 159 is a phosphotyrosine; by autocatalysis (Tyr-159). The 321-residue stretch at 159–479 folds into the Protein kinase domain; that stretch reads YEIDSLIGKG…PYYALQHSFF (321 aa). 165 to 173 is a binding site for ATP; the sequence is IGKGSFGQV. Tyr-177 carries the phosphotyrosine; by autocatalysis modification. Lys-188 is a binding site for ATP. A Phosphotyrosine; by autocatalysis modification is found at Tyr-219. 238 to 241 lines the ATP pocket; sequence FEML. Asp-287 serves as the catalytic Proton acceptor. Residue Ser-310 is modified to Phosphoserine; by autocatalysis. Phosphotyrosine; by autocatalysis occurs at positions 319 and 321. Phosphothreonine; by autocatalysis is present on Thr-402. The interval 408-442 is disordered; sequence TKDGKREYKPPGTRKLHNILGVETGGPGGRRAGES. Residue Tyr-449 is modified to Phosphotyrosine; by autocatalysis. Positions 485 to 501 are enriched in polar residues; the sequence is EGTNTSNSVSTSPAMEQ. Disordered stretches follow at residues 485–540, 596–679, and 744–763; these read EGTN…HSGG, NALH…GNQA, and DREE…VASS. Residues 502-525 show a composition bias toward low complexity; that stretch reads SQSSGTTSSTSSSSGGSSGTSNSG. Phosphoserine is present on residues Ser-529 and Ser-538. Residues 595–625 form a histidine-rich domain (HRD) region; it reads QNALHHHHGNSSHHHHHHHHHHHHHGQQALG. The span at 598 to 620 shows a compositional bias: basic residues; sequence LHHHHGNSSHHHHHHHHHHHHHG. The span at 634 to 645 shows a compositional bias: polar residues; sequence NSPTNSSSTQDS. The span at 654–672 shows a compositional bias: low complexity; the sequence is SMTSLSSSTTSSSTSSSST. Phosphoserine occurs at positions 748 and 758. Residues 754-763 show a composition bias toward polar residues; that stretch reads CVQQSPVASS.

The protein belongs to the protein kinase superfamily. CMGC Ser/Thr protein kinase family. MNB/DYRK subfamily. In terms of assembly, interacts with RAD54L2/ARIP4. Interacts with CRY2. Interacts with RANBP9. Interacts with WDR68. Interacts with SIRT1. (Microbial infection) Interacts with human adenovirus 5 E1A protein. In terms of processing, autophosphorylated on numerous tyrosine residues. Can also autophosphorylate on serine and threonine residues (in vitro). In terms of tissue distribution, ubiquitous. Highest levels in skeletal muscle, testis, fetal lung and fetal kidney.

It is found in the nucleus. The protein localises to the nucleus speckle. The enzyme catalyses L-seryl-[protein] + ATP = O-phospho-L-seryl-[protein] + ADP + H(+). It catalyses the reaction L-threonyl-[protein] + ATP = O-phospho-L-threonyl-[protein] + ADP + H(+). It carries out the reaction L-tyrosyl-[protein] + ATP = O-phospho-L-tyrosyl-[protein] + ADP + H(+). The catalysed reaction is [DNA-directed RNA polymerase] + ATP = phospho-[DNA-directed RNA polymerase] + ADP + H(+). With respect to regulation, inhibited by RANBP9. Inhibited by harmine, leucettamine B and leucettine L41. Its function is as follows. Dual-specificity kinase which possesses both serine/threonine and tyrosine kinase activities. Exhibits a substrate preference for proline at position P+1 and arginine at position P-3. Plays an important role in double-strand breaks (DSBs) repair following DNA damage. Mechanistically, phosphorylates RNF169 and increases its ability to block accumulation of TP53BP1 at the DSB sites thereby promoting homologous recombination repair (HRR). Also acts as a positive regulator of transcription by acting as a CTD kinase that mediates phosphorylation of the CTD (C-terminal domain) of the large subunit of RNA polymerase II (RNAP II) POLR2A. May play a role in a signaling pathway regulating nuclear functions of cell proliferation. Modulates alternative splicing by phosphorylating the splice factor SRSF6. Has pro-survival function and negatively regulates the apoptotic process. Promotes cell survival upon genotoxic stress through phosphorylation of SIRT1. This in turn inhibits p53/TP53 activity and apoptosis. Phosphorylates SEPTIN4, SEPTIN5 and SF3B1 at 'Thr-434'. In Homo sapiens (Human), this protein is Dual specificity tyrosine-phosphorylation-regulated kinase 1A.